We begin with the raw amino-acid sequence, 308 residues long: 1-acyl-sn-glycerol-3-phosphate acyltransferase (308 aa).

The next 3 membrane-spanning stretches (helical) occupy residues 65-85 (FLSM…LLPW), 124-144 (AIYI…WLIP), and 148-168 (VTIA…YVLA). An HXXXXD motif motif is present at residues 130–135 (HASLVD).

The protein belongs to the 1-acyl-sn-glycerol-3-phosphate acyltransferase family.

It is found in the membrane. It carries out the reaction a 1-acyl-sn-glycero-3-phosphate + an acyl-CoA = a 1,2-diacyl-sn-glycero-3-phosphate + CoA. Functionally, converts lysophosphatidic acid (LPA) into phosphatidic acid by incorporating acyl moiety at the 2 position. This enzyme shows a preference for medium-chain-length fatty acyl-coenzyme a substrates. This is 1-acyl-sn-glycerol-3-phosphate acyltransferase from Cocos nucifera (Coconut palm).